Here is a 38-residue protein sequence, read N- to C-terminus: MTQSNPNEQNVELNRTSLYWGLLLIXVLAVLFSNYFFN.

Residues 17–37 traverse the membrane as a helical segment; that stretch reads SLYWGLLLIXVLAVLFSNYFF.

Belongs to the PsbL family. In terms of assembly, PSII is composed of 1 copy each of membrane proteins PsbA, PsbB, PsbC, PsbD, PsbE, PsbF, PsbH, PsbI, PsbJ, PsbK, PsbL, PsbM, PsbT, PsbX, PsbY, PsbZ, Psb30/Ycf12, at least 3 peripheral proteins of the oxygen-evolving complex and a large number of cofactors. It forms dimeric complexes.

The protein localises to the plastid. The protein resides in the chloroplast thylakoid membrane. In terms of biological role, one of the components of the core complex of photosystem II (PSII). PSII is a light-driven water:plastoquinone oxidoreductase that uses light energy to abstract electrons from H(2)O, generating O(2) and a proton gradient subsequently used for ATP formation. It consists of a core antenna complex that captures photons, and an electron transfer chain that converts photonic excitation into a charge separation. This subunit is found at the monomer-monomer interface and is required for correct PSII assembly and/or dimerization. This is Photosystem II reaction center protein L from Allium textile (Textile onion).